A 386-amino-acid chain; its full sequence is 2-deoxy-scyllo-inosose synthase (386 aa).

Residues D42, 73-76 (EEHK), 105-109 (GVTGN), 129-130 (TT), 140-142 (SLK), and 151-152 (KN) each bind NAD(+). The active site involves K142. E184 provides a ligand contact to Co(2+). E244 is an active-site residue. Residues H247 and H263 each contribute to the Co(2+) site.

Belongs to the sugar phosphate cyclases superfamily. DOI synthase family. NAD(+) is required as a cofactor. Co(2+) serves as cofactor.

It catalyses the reaction D-glucose 6-phosphate = 2-deoxy-L-scyllo-inosose + phosphate. It participates in metabolic intermediate biosynthesis; 2-deoxystreptamine biosynthesis; 2-deoxystreptamine from D-glucose 6-phosphate: step 1/4. It functions in the pathway antibiotic biosynthesis; tobramycin biosynthesis. In terms of biological role, catalyzes the intramolecular carbocycle formation from D-glucose-6-phosphate to 2-deoxy-scyllo-inosose (DOI). This chain is 2-deoxy-scyllo-inosose synthase (tbmA), found in Streptoalloteichus tenebrarius (strain ATCC 17920 / DSM 40477 / JCM 4838 / CBS 697.72 / NBRC 16177 / NCIMB 11028 / NRRL B-12390 / A12253. 1 / ISP 5477) (Streptomyces tenebrarius).